A 1225-amino-acid polypeptide reads, in one-letter code: Cohesin subunit SA-3 (1225 aa).

The interval 1–97 (MSSPLQRAVG…HSRKQSEPPA (97 aa)) is disordered. Residues 15–26 (ALSASSSSSASL) show a composition bias toward low complexity. The segment covering 45 to 54 (LADEDTDFED) has biased composition (acidic residues). Basic residues-rich tracts occupy residues 59–69 (NVKKRAAKRPP) and 76–90 (KHPK…RHSR). Residues 309-394 (FVHRYRDVLP…SRFKDRMVSM (86 aa)) enclose the SCD domain. Disordered stretches follow at residues 546–567 (SEGH…KERK), 1063–1113 (AETS…STAV), and 1177–1225 (EEDE…IEDF). The segment covering 1078–1089 (VEGPAKPNREDV) has biased composition (basic and acidic residues). Over residues 1090–1099 (SSSQEESLQL) the composition is skewed to low complexity. A compositionally biased stretch (acidic residues) spans 1177-1191 (EEDEEEELEIQDESN). Residues 1198 to 1209 (DMQASSYSSTSE) show a composition bias toward polar residues. Position 1203 is a phosphoserine (S1203). The span at 1216 to 1225 (DSTELDIEDF) shows a compositional bias: acidic residues.

This sequence belongs to the SCC3 family. As to quaternary structure, component of the meiosis-specific cohesin complex, which also contains the SMC1 (SMC1A or SMC1B) and SMC3 heterodimer. Such complex likely contains RAD21, or the meiosis-specific related protein REC8. Interacts with CCDC79/TERB1; recruiting cohesin to telomeres to develop structural rigidity. Phosphorylated. In terms of tissue distribution, testis specific.

It localises to the nucleus. The protein localises to the chromosome. The protein resides in the centromere. Functionally, meiosis specific component of cohesin complex. The cohesin complex is required for the cohesion of sister chromatids after DNA replication. The cohesin complex apparently forms a large proteinaceous ring within which sister chromatids can be trapped. At anaphase, the complex is cleaved and dissociates from chromatin, allowing sister chromatids to segregate. The meiosis-specific cohesin complex probably replaces mitosis specific cohesin complex when it dissociates from chromatin during prophase I. In Homo sapiens (Human), this protein is Cohesin subunit SA-3 (STAG3).